A 748-amino-acid chain; its full sequence is MGQTGKKSEKGAVCWRKRVKSEYMRLRQLKRFRRADEVKSMFNTNRQKIMERTEILNQEWKQRRIQPVHIMTTVSSLRGTRECFVTSDLDFPKQVIPLKTLTAVASMPIMYSWSPLQQNFMVEDETVLHNIPYMGDEVLDQDGTFIEELIKNYDGKVHGDRECGFINDEIFVELVNALAQYSDYEDDEDGEDNQDDERDDITKDQDDNMEEKETLPLRKFPSDKIFEAISSVFPDKGTSEELKEKYKELTEQQLPGALPPECTPNIDGSNAKSVQREQSLHSFHTLFCRRCFKYDCFLHPFHATPNTYKRKNNEAANDGKLCGPYCYQLLEGAREFAAALTAEIIKTPPKRPSGRRRGRLPNNSSRPSTPTVNVLEAKDTDSDREAGTETGGESNDKEEEEKKDETDSSSEANSRCQTPIKMKPNIEPPENVEWSGAEASLFRVLIGTYYDNFCAIARLISTKTCRQVYEFRVKESSIIAPVIAEDVDTPPRKKKRKHRLWAAHCRKIQLKKDGSSNHVYNYQPCDHPRQPCDSSCPCVIAQNFCEKFCQCSSDCQNRFPGCRCKAQCNTKQCPCYLAVRECDPDLCLTCGAADHWDSKNVSCKNCSIQRGSKKHLLLAPSDVAGWGIYIKDPVQKNEFISEYCGEIISQDEADRRGKVYDKYMCSFLFNLNNDFVVDATRKGNKIRFANHSLNPNCYAKVMMVNGDHRIGIFAKRAIQTGEELFFDYRYSQADALKYVGIEREMEIP.

The span at 183-199 (DYEDDEDGEDNQDDERD) shows a compositional bias: acidic residues. Disordered stretches follow at residues 183–215 (DYED…KETL) and 347–428 (TPPK…NIEP). Residues 200-215 (DITKDQDDNMEEKETL) are compositionally biased toward basic and acidic residues. The span at 348–359 (PPKRPSGRRRGR) shows a compositional bias: basic residues. Residues 376–387 (EAKDTDSDREAG) are compositionally biased toward basic and acidic residues. The region spanning 505-607 (CRKIQLKKDG…SKNVSCKNCS (103 aa)) is the CXC domain. The 116-residue stretch at 614 to 729 (KHLLLAPSDV…TGEELFFDYR (116 aa)) folds into the SET domain.

This sequence belongs to the class V-like SAM-binding methyltransferase superfamily. Histone-lysine methyltransferase family. EZ subfamily. As to quaternary structure, component of the prc2/eed-ezh2 complex.

The protein localises to the nucleus. The catalysed reaction is L-lysyl(27)-[histone H3] + 3 S-adenosyl-L-methionine = N(6),N(6),N(6)-trimethyl-L-lysyl(27)-[histone H3] + 3 S-adenosyl-L-homocysteine + 3 H(+). Functionally, polycomb group (PcG) protein. Catalytic subunit of the prc2/eed-ezh2 complex, which methylates 'Lys-9' and 'Lys-27' of histone H3, leading to transcriptional repression of the affected target gene. May regulate the circadian clock via histone methylation at the promoter of the circadian genes. This Xenopus laevis (African clawed frog) protein is Histone-lysine N-methyltransferase EZH2 (ezh2-b).